We begin with the raw amino-acid sequence, 353 residues long: Rhodopsin (353 aa).

Over 1-36 the chain is Extracellular; sequence MNGTEGPFFYVPMVNTTGIVRSPYEYPQYYLVNPAA. N-linked (GlcNAc...) asparagine glycans are attached at residues asparagine 2 and asparagine 15. Residues 37–61 form a helical membrane-spanning segment; it reads YAALGAYMFLLILVGFPINFLTLYV. The Cytoplasmic portion of the chain corresponds to 62–73; that stretch reads TIEHKKLRTPLN. Residues 74–96 traverse the membrane as a helical segment; sequence YILLNLAVADLFMVLGGFTTTMY. Residues 97–110 lie on the Extracellular side of the membrane; it reads TSMHGYFVLGRLGC. Cysteine 110 and cysteine 187 are joined by a disulfide. Residues 111-133 form a helical membrane-spanning segment; that stretch reads NIEGFFATLGGEIALWSLVVLAI. Positions 134–136 match the 'Ionic lock' involved in activated form stabilization motif; it reads ERW. The Cytoplasmic segment spans residues 134–152; the sequence is ERWVVVCKPISNFRFGENH. The chain crosses the membrane as a helical span at residues 153–173; that stretch reads AIMGLAFTWTMAMACAAPPLV. The Extracellular segment spans residues 174–202; that stretch reads GWSRYIPEGMQCSCGIDYYTRAEGFNNES. An N-linked (GlcNAc...) asparagine glycan is attached at asparagine 200. The chain crosses the membrane as a helical span at residues 203–224; the sequence is FVIYMFICHFTIPLTVVFFCYG. Residues 225 to 252 lie on the Cytoplasmic side of the membrane; sequence RLLCAVKEAAAAQQESETTQRAEKEVTR. A helical transmembrane segment spans residues 253-274; it reads MVIMMVIAFLVCWLPYASVAWY. The Extracellular portion of the chain corresponds to 275-286; the sequence is IFTHQGSEFGPV. Residues 287–308 traverse the membrane as a helical segment; it reads FMTIPAFFAKSSSIYNPMIYIC. Residue lysine 296 is modified to N6-(retinylidene)lysine. Residues 309–353 are Cytoplasmic-facing; it reads LNKQFRHCMITTLCCGKNPFEEEEGASTASKTEASSVSSSSVSPA. Residues cysteine 322 and cysteine 323 are each lipidated (S-palmitoyl cysteine). The segment at 331 to 353 is disordered; sequence EEGASTASKTEASSVSSSSVSPA. The span at 334–353 shows a compositional bias: low complexity; the sequence is ASTASKTEASSVSSSSVSPA.

Belongs to the G-protein coupled receptor 1 family. Opsin subfamily. Phosphorylated on some or all of the serine and threonine residues present in the C-terminal region. Post-translationally, contains one covalently linked retinal chromophore.

The protein resides in the membrane. It localises to the cell projection. It is found in the cilium. The protein localises to the photoreceptor outer segment. In terms of biological role, photoreceptor required for image-forming vision at low light intensity. While most salt water fish species use retinal as chromophore, most freshwater fish use 3-dehydroretinal, or a mixture of retinal and 3-dehydroretinal. Light-induced isomerization of 11-cis to all-trans retinal triggers a conformational change that activates signaling via G-proteins. Subsequent receptor phosphorylation mediates displacement of the bound G-protein alpha subunit by arrestin and terminates signaling. The protein is Rhodopsin (rho) of Diplodus annularis (Annular seabream).